The following is a 141-amino-acid chain: Large ribosomal subunit protein uL11 (141 aa).

The protein belongs to the universal ribosomal protein uL11 family. In terms of assembly, part of the ribosomal stalk of the 50S ribosomal subunit. Interacts with L10 and the large rRNA to form the base of the stalk. L10 forms an elongated spine to which L12 dimers bind in a sequential fashion forming a multimeric L10(L12)X complex. Post-translationally, one or more lysine residues are methylated.

Functionally, forms part of the ribosomal stalk which helps the ribosome interact with GTP-bound translation factors. The sequence is that of Large ribosomal subunit protein uL11 from Lactiplantibacillus plantarum (strain ATCC BAA-793 / NCIMB 8826 / WCFS1) (Lactobacillus plantarum).